The sequence spans 115 residues: Non-specific lipid-transfer protein Cw18 (115 aa).

The signal sequence occupies residues 1–25; it reads MARTAATKLALVALVAAMLLVAADA. Intrachain disulfides connect Cys29-Cys77, Cys39-Cys54, Cys55-Cys97, and Cys75-Cys111.

It belongs to the plant LTP family. In terms of tissue distribution, highly expressed in leaves and coleoptiles. No expression in roots.

Plant non-specific lipid-transfer proteins transfer phospholipids as well as galactolipids across membranes. May play a role in wax or cutin deposition in the cell walls of expanding epidermal cells and certain secretory tissues. This is Non-specific lipid-transfer protein Cw18 (CW18) from Hordeum vulgare (Barley).